Consider the following 921-residue polypeptide: Isoleucine--tRNA ligase (921 aa).

Positions 57-67 match the 'HIGH' region motif; it reads PYANGDIHMGH. E552 serves as a coordination point for L-isoleucyl-5'-AMP. Residues 593–597 carry the 'KMSKS' region motif; that stretch reads KMSKS. ATP is bound at residue K596. C888, C891, C908, and C911 together coordinate Zn(2+).

It belongs to the class-I aminoacyl-tRNA synthetase family. IleS type 1 subfamily. Monomer. Zn(2+) is required as a cofactor.

It localises to the cytoplasm. The catalysed reaction is tRNA(Ile) + L-isoleucine + ATP = L-isoleucyl-tRNA(Ile) + AMP + diphosphate. Functionally, catalyzes the attachment of isoleucine to tRNA(Ile). As IleRS can inadvertently accommodate and process structurally similar amino acids such as valine, to avoid such errors it has two additional distinct tRNA(Ile)-dependent editing activities. One activity is designated as 'pretransfer' editing and involves the hydrolysis of activated Val-AMP. The other activity is designated 'posttransfer' editing and involves deacylation of mischarged Val-tRNA(Ile). The polypeptide is Isoleucine--tRNA ligase (Bacillus cereus (strain 03BB102)).